The following is a 421-amino-acid chain: Isocitrate dehydrogenase [NADP], mitochondrial (421 aa).

A mitochondrion-targeting transit peptide spans 1 to 8; the sequence is ARAAARHY. 4 positions are modified to N6-acetyllysine: lysine 14, lysine 17, lysine 36, and lysine 38. N6-acetyllysine; alternate occurs at positions 49 and 75. N6-succinyllysine; alternate is present on residues lysine 49 and lysine 75. NADP(+)-binding positions include 84–86 and arginine 91; that span reads TIT. Threonine 86 contacts D-threo-isocitrate. Residues 103 to 109 and arginine 118 contribute to the D-threo-isocitrate site; that span reads SPNGTIR. Lysine 124 is subject to N6-acetyllysine. Lysine 135 is subject to N6-acetyllysine; alternate. Lysine 135 carries the post-translational modification N6-succinyllysine; alternate. Arginine 141 contacts D-threo-isocitrate. Lysine 149 and lysine 162 each carry N6-acetyllysine; alternate. N6-succinyllysine; alternate occurs at positions 149 and 162. The residue at position 168 (lysine 168) is an N6-acetyllysine. N6-acetyllysine; alternate is present on lysine 225. An N6-succinyllysine; alternate modification is found at lysine 225. An N6-acetyllysine mark is found at lysine 232, lysine 241, lysine 244, and lysine 249. Position 251 is an N6-acetyllysine; alternate (lysine 251). At lysine 251 the chain carries N6-succinyllysine; alternate. Position 260 (aspartate 260) interacts with Mn(2+). Position 268 (lysine 268) interacts with NADP(+). Residue aspartate 283 participates in Mn(2+) binding. NADP(+)-binding positions include 318 to 323 and asparagine 336; that span reads GTVTRH. The residue at position 353 (lysine 353) is an N6-acetyllysine; alternate. N6-succinyllysine; alternate is present on lysine 353. N6-acetyllysine occurs at positions 369, 382, and 411.

Belongs to the isocitrate and isopropylmalate dehydrogenases family. Homodimer. It depends on Mg(2+) as a cofactor. Mn(2+) serves as cofactor. Post-translationally, acetylation at Lys-382 dramatically reduces catalytic activity. Deacetylated by SIRT3.

It localises to the mitochondrion. The enzyme catalyses D-threo-isocitrate + NADP(+) = 2-oxoglutarate + CO2 + NADPH. Plays a role in intermediary metabolism and energy production. It may tightly associate or interact with the pyruvate dehydrogenase complex. This Sus scrofa (Pig) protein is Isocitrate dehydrogenase [NADP], mitochondrial (IDH2).